An 81-amino-acid polypeptide reads, in one-letter code: Small ribosomal subunit protein bS16 (81 aa).

The protein belongs to the bacterial ribosomal protein bS16 family.

The protein is Small ribosomal subunit protein bS16 of Teredinibacter turnerae (strain ATCC 39867 / T7901).